Here is a 633-residue protein sequence, read N- to C-terminus: Kelch repeat and BTB domain-containing protein 11 (633 aa).

The tract at residues 1-118 (MENSVAPFVL…EDPPSRHEHA (118 aa)) is disordered. The segment covering 35 to 60 (STAQTPCSLSASLCFSSGDDSPPQSR) has biased composition (polar residues). Positions 61–73 (ASAAEGSEASPPS) are enriched in low complexity. Phosphoserine is present on residues serine 70, serine 73, serine 92, serine 95, serine 107, and serine 113. A BTB domain is found at 146–206 (PDLVIEVAGR…AYSGRMAGVR (61 aa)). Kelch repeat units lie at residues 317 to 365 (RPQS…VLFN), 366 to 418 (YLFL…ALDG), 419 to 463 (HLYA…TCNG), and 465 to 506 (IYVS…ALDG).

This is Kelch repeat and BTB domain-containing protein 11 (Kbtbd11) from Mus musculus (Mouse).